Reading from the N-terminus, the 363-residue chain is 5-formaminoimidazole-4-carboxamide-1-(beta)-D-ribofuranosyl 5'-monophosphate synthetase (363 aa).

Residues His-29 and Ser-96 each contribute to the 5-amino-1-(5-phospho-beta-D-ribosyl)imidazole-4-carboxamide site. Residues 118 to 350 (RDILRWESER…MGRRVAREIR (233 aa)) enclose the ATP-grasp domain. Residues 148–210 (PEEI…TNFC) and Glu-232 each bind ATP. 5-amino-1-(5-phospho-beta-D-ribosyl)imidazole-4-carboxamide is bound at residue Asn-260. Residues Gln-299 and Glu-312 each contribute to the Mg(2+) site.

Belongs to the phosphohexose mutase family. Mg(2+) is required as a cofactor. The cofactor is Mn(2+).

The enzyme catalyses 5-amino-1-(5-phospho-beta-D-ribosyl)imidazole-4-carboxamide + formate + ATP = 5-formamido-1-(5-phospho-D-ribosyl)imidazole-4-carboxamide + ADP + phosphate. The protein operates within purine metabolism; IMP biosynthesis via de novo pathway; 5-formamido-1-(5-phospho-D-ribosyl)imidazole-4-carboxamide from 5-amino-1-(5-phospho-D-ribosyl)imidazole-4-carboxamide (formate route): step 1/1. Its function is as follows. Catalyzes the ATP- and formate-dependent formylation of 5-aminoimidazole-4-carboxamide-1-beta-d-ribofuranosyl 5'-monophosphate (AICAR) to 5-formaminoimidazole-4-carboxamide-1-beta-d-ribofuranosyl 5'-monophosphate (FAICAR) in the absence of folates. This chain is 5-formaminoimidazole-4-carboxamide-1-(beta)-D-ribofuranosyl 5'-monophosphate synthetase, found in Methanothermobacter thermautotrophicus (strain ATCC 29096 / DSM 1053 / JCM 10044 / NBRC 100330 / Delta H) (Methanobacterium thermoautotrophicum).